The primary structure comprises 334 residues: Protein-methionine-sulfoxide reductase catalytic subunit MsrP (334 aa).

Residues 1-44 (MKKIRPLTEADVTAESAFFMQRRQVLKALGISAAALSLPSTAQA) constitute a signal peptide (tat-type signal). Mo-molybdopterin-binding positions include N88, 91-92 (YE), C146, T181, N233, R238, and 249-251 (GIK).

It belongs to the MsrP family. Heterodimer of a catalytic subunit (MsrP) and a heme-binding subunit (MsrQ). Mo-molybdopterin serves as cofactor. In terms of processing, predicted to be exported by the Tat system. The position of the signal peptide cleavage has not been experimentally proven.

It is found in the periplasm. It catalyses the reaction L-methionyl-[protein] + a quinone + H2O = L-methionyl-(S)-S-oxide-[protein] + a quinol. The catalysed reaction is L-methionyl-[protein] + a quinone + H2O = L-methionyl-(R)-S-oxide-[protein] + a quinol. Its function is as follows. Part of the MsrPQ system that repairs oxidized periplasmic proteins containing methionine sulfoxide residues (Met-O), using respiratory chain electrons. Thus protects these proteins from oxidative-stress damage caused by reactive species of oxygen and chlorine generated by the host defense mechanisms. MsrPQ is essential for the maintenance of envelope integrity under bleach stress, rescuing a wide series of structurally unrelated periplasmic proteins from methionine oxidation, including the primary periplasmic chaperone SurA and the lipoprotein Pal. The catalytic subunit MsrP is non-stereospecific, being able to reduce both (R-) and (S-) diastereoisomers of methionine sulfoxide. This chain is Protein-methionine-sulfoxide reductase catalytic subunit MsrP, found in Salmonella dublin (strain CT_02021853).